The sequence spans 155 residues: Small ribosomal subunit protein uS7 (155 aa).

It belongs to the universal ribosomal protein uS7 family. In terms of assembly, part of the 30S ribosomal subunit. Contacts proteins S9 and S11.

Its function is as follows. One of the primary rRNA binding proteins, it binds directly to 16S rRNA where it nucleates assembly of the head domain of the 30S subunit. Is located at the subunit interface close to the decoding center, probably blocks exit of the E-site tRNA. This is Small ribosomal subunit protein uS7 from Xylella fastidiosa (strain M12).